Consider the following 307-residue polypeptide: HPr kinase/phosphorylase (307 aa).

Residues histidine 136 and lysine 157 contribute to the active site. 151 to 158 (GESGIGKS) contacts ATP. Residue serine 158 coordinates Mg(2+). Catalysis depends on aspartate 175, which acts as the Proton acceptor; for phosphorylation activity. Proton donor; for dephosphorylation activity. An important for the catalytic mechanism of both phosphorylation and dephosphorylation region spans residues 198 to 207 (LEVRGMGIID). Glutamate 199 provides a ligand contact to Mg(2+). Arginine 240 is a catalytic residue. Residues 261–266 (PIRPGR) are important for the catalytic mechanism of dephosphorylation.

It belongs to the HPrK/P family. As to quaternary structure, homohexamer. It depends on Mg(2+) as a cofactor.

The catalysed reaction is [HPr protein]-L-serine + ATP = [HPr protein]-O-phospho-L-serine + ADP + H(+). The enzyme catalyses [HPr protein]-O-phospho-L-serine + phosphate + H(+) = [HPr protein]-L-serine + diphosphate. Catalyzes the ATP- as well as the pyrophosphate-dependent phosphorylation of a specific serine residue in HPr, a phosphocarrier protein of the phosphoenolpyruvate-dependent sugar phosphotransferase system (PTS). HprK/P also catalyzes the pyrophosphate-producing, inorganic phosphate-dependent dephosphorylation (phosphorolysis) of seryl-phosphorylated HPr (P-Ser-HPr). The two antagonistic activities of HprK/P are regulated by several intracellular metabolites, which change their concentration in response to the absence or presence of rapidly metabolisable carbon sources (glucose, fructose, etc.) in the growth medium. Therefore, by controlling the phosphorylation state of HPr, HPrK/P is a sensor enzyme that plays a major role in the regulation of carbon metabolism and sugar transport: it mediates carbon catabolite repression (CCR), and regulates PTS-catalyzed carbohydrate uptake and inducer exclusion. The sequence is that of HPr kinase/phosphorylase from Clostridium perfringens (strain 13 / Type A).